Reading from the N-terminus, the 79-residue chain is MSDIAERVKKIVVEHLGVEPEKVVESANFIDDLGADSLDTVELVMAFEEEFNVEIPDDAAETIQTVGDAVKFLEKNSAA.

One can recognise a Carrier domain in the interval 2–77; that stretch reads SDIAERVKKI…DAVKFLEKNS (76 aa). The residue at position 37 (Ser37) is an O-(pantetheine 4'-phosphoryl)serine.

Belongs to the acyl carrier protein (ACP) family. Post-translationally, 4'-phosphopantetheine is transferred from CoA to a specific serine of apo-ACP by AcpS. This modification is essential for activity because fatty acids are bound in thioester linkage to the sulfhydryl of the prosthetic group.

It is found in the cytoplasm. It functions in the pathway lipid metabolism; fatty acid biosynthesis. Its function is as follows. Carrier of the growing fatty acid chain in fatty acid biosynthesis. In Methylobacterium radiotolerans (strain ATCC 27329 / DSM 1819 / JCM 2831 / NBRC 15690 / NCIMB 10815 / 0-1), this protein is Acyl carrier protein.